A 447-amino-acid chain; its full sequence is Putative branched-chain amino acid carrier protein SH1502 (447 aa).

13 helical membrane-spanning segments follow: residues 6–26, 40–60, 74–94, 116–136, 143–163, 193–213, 229–249, 270–287, 290–310, 328–348, 350–370, 382–402, and 417–437; these read WIVGFTLFAMFFGAGNLIFPP, VIAFCLTGIGLPLLGVIVGAL, PKFSVIFLIIIYLTIGPLFAI, LVLFIFTLIYFLVVLYLCINP, IGSLLTPLLLITILAMIIKGF, GYLTMDAIAAIAFSMIVVNAI, VMSGLIAAIALVFIYVSLGFI, VGAYLLTTMAANSFGVFG, LLGIIVALACLTTACGLIVSV, IFFTLISFILANLGLNAVISM, VPVLSVIYPIAITVVLLILLA, IPIAVISIVSILSVISTNGWV, and LEWFPIAVVATIIGYVVAKFV.

This sequence belongs to the branched chain amino acid transporter family.

The protein localises to the cell membrane. Its function is as follows. Component of the transport system for branched-chain amino acids (leucine, isoleucine and valine), which is coupled to a proton motive force. In Staphylococcus haemolyticus (strain JCSC1435), this protein is Putative branched-chain amino acid carrier protein SH1502.